Reading from the N-terminus, the 325-residue chain is Alkanal monooxygenase beta chain (325 aa).

The protein belongs to the bacterial luciferase oxidoreductase family. As to quaternary structure, heterodimer of an alpha and a beta chain.

The catalysed reaction is a long-chain fatty aldehyde + FMNH2 + O2 = a long-chain fatty acid + hnu + FMN + H2O + 2 H(+). Its function is as follows. Light-emitting reaction in luminous bacteria. The specific role of the beta subunit is unknown, but it is absolutely required for bioluminescence activity. This chain is Alkanal monooxygenase beta chain (luxB), found in Photobacterium leiognathi.